We begin with the raw amino-acid sequence, 387 residues long: 3-ketoacyl-CoA thiolase (387 aa).

The Acyl-thioester intermediate role is filled by C91. Catalysis depends on proton acceptor residues H343 and C373.

The protein belongs to the thiolase-like superfamily. Thiolase family. In terms of assembly, heterotetramer of two alpha chains (FadB) and two beta chains (FadA).

It localises to the cytoplasm. It catalyses the reaction an acyl-CoA + acetyl-CoA = a 3-oxoacyl-CoA + CoA. It functions in the pathway lipid metabolism; fatty acid beta-oxidation. In terms of biological role, catalyzes the final step of fatty acid oxidation in which acetyl-CoA is released and the CoA ester of a fatty acid two carbons shorter is formed. The sequence is that of 3-ketoacyl-CoA thiolase from Shewanella denitrificans (strain OS217 / ATCC BAA-1090 / DSM 15013).